Reading from the N-terminus, the 415-residue chain is FXa-directed anticoagulant (415 aa).

A signal peptide spans 1–17 (MYLKIVILVTFPLVCFT). 4 N-linked (GlcNAc...) asparagine glycosylation sites follow: Asn-117, Asn-166, Asn-216, and Asn-320.

The protein belongs to the serpin family. As to quaternary structure, (Microbial infection) Interacts with Zika virus envelope protein E and Zika virus-like particles; the interaction does not affect Zika virus replication in human endothelial cells and keratinocytes. Post-translationally, the N-terminus is blocked. In terms of tissue distribution, female salivary gland (at protein level). Not detected in female carcass without head and salivary glands. Not detected in male tissues.

The protein localises to the secreted. In terms of biological role, anticoagulant serpin-type protein inhibiting host coagulation factor Xa (F10). Does not inhibit host thrombin (F2) and trypsin. (Microbial infection) Does not affect Zika virus replication in human endothelial cells and keratinocytes. This Aedes aegypti (Yellowfever mosquito) protein is FXa-directed anticoagulant.